A 286-amino-acid chain; its full sequence is Bifunctional protein FolD (286 aa).

NADP(+) contacts are provided by residues Gly165–Ser167, Ser190, and Ile231.

This sequence belongs to the tetrahydrofolate dehydrogenase/cyclohydrolase family. In terms of assembly, homodimer.

The enzyme catalyses (6R)-5,10-methylene-5,6,7,8-tetrahydrofolate + NADP(+) = (6R)-5,10-methenyltetrahydrofolate + NADPH. The catalysed reaction is (6R)-5,10-methenyltetrahydrofolate + H2O = (6R)-10-formyltetrahydrofolate + H(+). It participates in one-carbon metabolism; tetrahydrofolate interconversion. Its function is as follows. Catalyzes the oxidation of 5,10-methylenetetrahydrofolate to 5,10-methenyltetrahydrofolate and then the hydrolysis of 5,10-methenyltetrahydrofolate to 10-formyltetrahydrofolate. The protein is Bifunctional protein FolD of Thermodesulfovibrio yellowstonii (strain ATCC 51303 / DSM 11347 / YP87).